The following is a 111-amino-acid chain: Probable 4-amino-4-deoxy-L-arabinose-phosphoundecaprenol flippase subunit ArnE (111 aa).

Residues 1-35 lie on the Cytoplasmic side of the membrane; sequence MIWLTLVFASLLSVAGQLCQKQATCFVAINKRRKH. The chain crosses the membrane as a helical span at residues 36–56; sequence IVLWLGLALACLGLAMVLWLL. In terms of domain architecture, EamA spans 40–109; sequence LGLALACLGL…IIGGIVILGS (70 aa). At 57-60 the chain is on the periplasmic side; the sequence is VLQN. A helical transmembrane segment spans residues 61–81; that stretch reads VPVGIAYPMLSLNFVWVTLAA. Residues 82-87 lie on the Cytoplasmic side of the membrane; sequence VKLWHE. The chain crosses the membrane as a helical span at residues 88–108; sequence PVSPRHWCGVAFIIGGIVILG. The Periplasmic portion of the chain corresponds to 109–111; the sequence is STV.

The protein belongs to the ArnE family. As to quaternary structure, heterodimer of ArnE and ArnF.

The protein localises to the cell inner membrane. The protein operates within bacterial outer membrane biogenesis; lipopolysaccharide biosynthesis. Translocates 4-amino-4-deoxy-L-arabinose-phosphoundecaprenol (alpha-L-Ara4N-phosphoundecaprenol) from the cytoplasmic to the periplasmic side of the inner membrane. This is Probable 4-amino-4-deoxy-L-arabinose-phosphoundecaprenol flippase subunit ArnE from Escherichia coli (strain ATCC 8739 / DSM 1576 / NBRC 3972 / NCIMB 8545 / WDCM 00012 / Crooks).